Consider the following 149-residue polypeptide: Large ribosomal subunit protein uL13 (149 aa).

This sequence belongs to the universal ribosomal protein uL13 family. As to quaternary structure, part of the 50S ribosomal subunit.

This protein is one of the early assembly proteins of the 50S ribosomal subunit, although it is not seen to bind rRNA by itself. It is important during the early stages of 50S assembly. The sequence is that of Large ribosomal subunit protein uL13 from Chlorobium phaeovibrioides (strain DSM 265 / 1930) (Prosthecochloris vibrioformis (strain DSM 265)).